A 650-amino-acid polypeptide reads, in one-letter code: Transcription factor LHW (650 aa).

Disordered regions lie at residues 381 to 417 (LTKV…SSVY) and 431 to 470 (LKRE…DRQM). Residues 384–397 (VSNSSVTTPSHSSP) are compositionally biased toward low complexity. Positions 451-458 (NRKRLKPG) match the Nuclear localization signal motif. In terms of domain architecture, bHLH spans 455–504 (LKPGENPRPRPKDRQMIQDRVKELREIIPNGAKCSIDALLERTIKHMLFL). Residues 456–470 (KPGENPRPRPKDRQM) show a composition bias toward basic and acidic residues.

Belongs to the bHLH protein family. LHW subfamily. In terms of assembly, homodimer. Can also interact with bHLH proteins. As to expression, expressed in both root and shoot meristems. Present in root tips.

The protein resides in the nucleus. In terms of biological role, transcription activator that regulates root development; promotes the production of stele cells in roots. Coordinately controls the number of all vascular cell types by regulating the size of the pool of cells from which they arise. This Arabidopsis thaliana (Mouse-ear cress) protein is Transcription factor LHW (LHW).